The primary structure comprises 409 residues: Fructose-1,6-bisphosphatase, chloroplastic (409 aa).

A chloroplast-targeting transit peptide spans 1–49; sequence MAAATTTTSRPLLLSRQQAAASSLQCRLPRRPGSSLFAGQGQASTPNVR. Residues Glu-131, Glu-160, Asp-181, Leu-183, and Asp-184 each contribute to the Mg(2+) site. 184–187 provides a ligand contact to substrate; sequence DGSS. A disulfide bridge links Cys-223 with Cys-228. Positions 287, 319, 337, 339, and 349 each coordinate substrate. Glu-355 contacts Mg(2+).

It belongs to the FBPase class 1 family. As to quaternary structure, homotetramer. Mg(2+) serves as cofactor. In photosynthetically active tissues, and in the shoot and root apical meristems.

The protein resides in the plastid. Its subcellular location is the chloroplast. It carries out the reaction beta-D-fructose 1,6-bisphosphate + H2O = beta-D-fructose 6-phosphate + phosphate. It functions in the pathway carbohydrate biosynthesis; Calvin cycle. This chain is Fructose-1,6-bisphosphatase, chloroplastic (FBP), found in Triticum aestivum (Wheat).